Reading from the N-terminus, the 390-residue chain is ATP phosphoribosyltransferase regulatory subunit (390 aa).

The protein belongs to the class-II aminoacyl-tRNA synthetase family. HisZ subfamily. In terms of assembly, heteromultimer composed of HisG and HisZ subunits.

Its subcellular location is the cytoplasm. It participates in amino-acid biosynthesis; L-histidine biosynthesis; L-histidine from 5-phospho-alpha-D-ribose 1-diphosphate: step 1/9. Functionally, required for the first step of histidine biosynthesis. May allow the feedback regulation of ATP phosphoribosyltransferase activity by histidine. This is ATP phosphoribosyltransferase regulatory subunit from Nitrosomonas eutropha (strain DSM 101675 / C91 / Nm57).